Here is a 642-residue protein sequence, read N- to C-terminus: DNA gyrase subunit B (642 aa).

One can recognise a Toprim domain in the interval 422–536; sequence CELFIVEGDS…AGYVYIAQPP (115 aa). Residues Glu428, Asp501, and Asp503 each contribute to the Mg(2+) site.

This sequence belongs to the type II topoisomerase family. As to quaternary structure, heterotetramer, composed of two GyrA and two GyrB chains. Within the heterotetramer, GyrA contains the active site tyrosine that forms a covalent intermediate with the DNA, while GyrB contributes the cofactor binding sites and catalyzes ATP hydrolysis. Mg(2+) is required as a cofactor. Mn(2+) serves as cofactor. It depends on Ca(2+) as a cofactor.

It is found in the cytoplasm. It carries out the reaction ATP-dependent breakage, passage and rejoining of double-stranded DNA.. Pyrrolopyrimidines inhibit both GyrB and its paralog in topoisomerase IV (parE). DNA gyrase negatively supercoils closed circular double-stranded DNA in an ATP-dependent manner and also catalyzes the interconversion of other topological isomers of double-stranded DNA rings, including catenanes and knotted rings. The protein is DNA gyrase subunit B of Enterococcus faecalis (strain ATCC 700802 / V583).